The chain runs to 347 residues: Protein phosphatase 2C homolog 1 (347 aa).

Residues 1–41 (MKGSHPNAGSLLEPLHKLNPFSENSTSGHRKNASDHSADGE) form a disordered region. Residues 32 to 41 (NASDHSADGE) are compositionally biased toward basic and acidic residues. The region spanning 71–323 (LAGLMEDKNQ…DNITCIVVNL (253 aa)) is the PPM-type phosphatase domain. Residues Asp109, Gly110, Asp275, and Asp314 each contribute to the Mn(2+) site.

The protein belongs to the PP2C family. In terms of assembly, monomer. Mg(2+) is required as a cofactor. Requires Mn(2+) as cofactor.

The catalysed reaction is O-phospho-L-seryl-[protein] + H2O = L-seryl-[protein] + phosphate. It catalyses the reaction O-phospho-L-threonyl-[protein] + H2O = L-threonyl-[protein] + phosphate. Its function is as follows. Serine and threonine phosphatase. Has a specialized role in the heat shock response. May be responsible for the dephosphorylation of hsp90. In Schizosaccharomyces pombe (strain 972 / ATCC 24843) (Fission yeast), this protein is Protein phosphatase 2C homolog 1 (ptc1).